Here is a 278-residue protein sequence, read N- to C-terminus: ATP synthase subunit a (278 aa).

A run of 6 helical transmembrane segments spans residues 43-63 (TWHIDSLFFSVGLGVLFLWIF), 104-124 (IAPLALTIFVWVFMMNFMDMI), 148-168 (DVNITFSLAIGVFLLIIFYSI), 191-211 (IPVNLLLETVTLIAKPISLAL), 222-242 (LIFILIALMYGTNLLLSTLGV), and 249-269 (LIFHILVITLQAFIFMMLTIV).

Belongs to the ATPase A chain family. F-type ATPases have 2 components, CF(1) - the catalytic core - and CF(0) - the membrane proton channel. CF(1) has five subunits: alpha(3), beta(3), gamma(1), delta(1), epsilon(1). CF(0) has three main subunits: a(1), b(2) and c(9-12). The alpha and beta chains form an alternating ring which encloses part of the gamma chain. CF(1) is attached to CF(0) by a central stalk formed by the gamma and epsilon chains, while a peripheral stalk is formed by the delta and b chains.

The protein resides in the cell inner membrane. Key component of the proton channel; it plays a direct role in the translocation of protons across the membrane. This is ATP synthase subunit a from Shewanella baltica (strain OS185).